We begin with the raw amino-acid sequence, 303 residues long: Ribosomal RNA small subunit methyltransferase H (303 aa).

S-adenosyl-L-methionine contacts are provided by residues 32–34, aspartate 52, phenylalanine 78, aspartate 99, and glutamine 106; that span reads GGH.

Belongs to the methyltransferase superfamily. RsmH family.

The protein localises to the cytoplasm. It catalyses the reaction cytidine(1402) in 16S rRNA + S-adenosyl-L-methionine = N(4)-methylcytidine(1402) in 16S rRNA + S-adenosyl-L-homocysteine + H(+). In terms of biological role, specifically methylates the N4 position of cytidine in position 1402 (C1402) of 16S rRNA. This Acinetobacter baylyi (strain ATCC 33305 / BD413 / ADP1) protein is Ribosomal RNA small subunit methyltransferase H.